A 61-amino-acid chain; its full sequence is Probable tautomerase SSP1389 (61 aa).

The active-site Proton acceptor; via imino nitrogen is the proline 2.

This sequence belongs to the 4-oxalocrotonate tautomerase family.

This chain is Probable tautomerase SSP1389, found in Staphylococcus saprophyticus subsp. saprophyticus (strain ATCC 15305 / DSM 20229 / NCIMB 8711 / NCTC 7292 / S-41).